We begin with the raw amino-acid sequence, 352 residues long: Ion-translocating oxidoreductase complex subunit D (352 aa).

5 helical membrane passes run 20–40 (IMLL…WFFG), 42–62 (GTLV…ALVL), 78–109 (ALLT…VIIA), 123–143 (PAMI…TSWL), and 148–168 (IAVN…GHIT). Threonine 187 carries the FMN phosphoryl threonine modification. 5 helical membrane passes run 215-235 (LAGV…VWLL), 242-262 (WHIP…GWLF), 267-287 (LAAP…FFIL), 301-321 (LIFG…GGYP), and 322-342 (DGVA…DYYT).

It belongs to the NqrB/RnfD family. As to quaternary structure, the complex is composed of six subunits: RsxA, RsxB, RsxC, RsxD, RsxE and RsxG. Requires FMN as cofactor.

Its subcellular location is the cell inner membrane. In terms of biological role, part of a membrane-bound complex that couples electron transfer with translocation of ions across the membrane. Required to maintain the reduced state of SoxR. This chain is Ion-translocating oxidoreductase complex subunit D, found in Escherichia coli (strain SMS-3-5 / SECEC).